The chain runs to 1241 residues: ATP-dependent helicase/nuclease subunit A (1241 aa).

One can recognise a UvrD-like helicase ATP-binding domain in the interval 12–485 (SQWTDDQWKA…IDLAKNFRSR (474 aa)). Residue 33–40 (AAAGSGKT) participates in ATP binding. One can recognise a UvrD-like helicase C-terminal domain in the interval 505 to 805 (GEIDYDADAE…RIMTIHKSKG (301 aa)).

It belongs to the helicase family. AddA subfamily. In terms of assembly, heterodimer of AddA and AddB/RexB. Requires Mg(2+) as cofactor.

The enzyme catalyses Couples ATP hydrolysis with the unwinding of duplex DNA by translocating in the 3'-5' direction.. It carries out the reaction ATP + H2O = ADP + phosphate + H(+). In terms of biological role, the heterodimer acts as both an ATP-dependent DNA helicase and an ATP-dependent, dual-direction single-stranded exonuclease. Recognizes the chi site generating a DNA molecule suitable for the initiation of homologous recombination. The AddA nuclease domain is required for chi fragment generation; this subunit has the helicase and 3' -&gt; 5' nuclease activities. This Bacillus cereus (strain AH187) protein is ATP-dependent helicase/nuclease subunit A.